A 278-amino-acid polypeptide reads, in one-letter code: Ribosomal RNA small subunit methyltransferase A (278 aa).

S-adenosyl-L-methionine contacts are provided by N25, L27, G52, E73, D97, and N117.

Belongs to the class I-like SAM-binding methyltransferase superfamily. rRNA adenine N(6)-methyltransferase family. RsmA subfamily.

It is found in the cytoplasm. The catalysed reaction is adenosine(1518)/adenosine(1519) in 16S rRNA + 4 S-adenosyl-L-methionine = N(6)-dimethyladenosine(1518)/N(6)-dimethyladenosine(1519) in 16S rRNA + 4 S-adenosyl-L-homocysteine + 4 H(+). Its function is as follows. Specifically dimethylates two adjacent adenosines (A1518 and A1519) in the loop of a conserved hairpin near the 3'-end of 16S rRNA in the 30S particle. May play a critical role in biogenesis of 30S subunits. The polypeptide is Ribosomal RNA small subunit methyltransferase A (Desulfitobacterium hafniense (strain DSM 10664 / DCB-2)).